We begin with the raw amino-acid sequence, 139 residues long: Invertebrate-type lysozyme 2 (139 aa).

An N-terminal signal peptide occupies residues 1-18 (MFVKAILLLSIAVAYASA). An I-type lysozyme domain is found at 19 to 138 (DCLHCICMRE…WKGVHSCCGC (120 aa)). 7 cysteine pairs are disulfide-bonded: Cys-20–Cys-106, Cys-23–Cys-138, Cys-25–Cys-31, Cys-36–Cys-45, Cys-58–Cys-86, Cys-76–Cys-82, and Cys-98–Cys-120. Catalysis depends on Glu-28, which acts as the Proton donor. Residue Asp-39 is the Nucleophile of the active site. 51–57 (KIPYYED) is a binding site for substrate. Residues Tyr-90 and 113–115 (HNG) contribute to the substrate site.

This sequence belongs to the glycosyl hydrolase 22 family. Type-I lysozyme subfamily. Expressed in pharyngeal muscle cell pm3, nerve ring and intestine.

It carries out the reaction Hydrolysis of (1-&gt;4)-beta-linkages between N-acetylmuramic acid and N-acetyl-D-glucosamine residues in a peptidoglycan and between N-acetyl-D-glucosamine residues in chitodextrins.. In terms of biological role, has bacteriolytic activity against Gram-positive bacteria. May play a role in resistance to Gram-positive bacterium S.aureus infection. The protein is Invertebrate-type lysozyme 2 of Caenorhabditis elegans.